We begin with the raw amino-acid sequence, 728 residues long: Dehydrocurvularin biosynthesis regulator (728 aa).

The zn(2)-C6 fungal-type DNA-binding region spans C28–C58. 2 disordered regions span residues G75 to R130 and Q606 to A626. Over residues R89–E109 the composition is skewed to polar residues.

The protein resides in the nucleus. In terms of biological role, transcription factor involved in regulation of the dehydrocurvularin biosynthesis gene cluster. The polypeptide is Dehydrocurvularin biosynthesis regulator (Aspergillus terreus).